Consider the following 495-residue polypeptide: IQ domain-containing protein IQM5 (495 aa).

The interval 89-122 is disordered; it reads ENRGGEEEDERGSSPKRRNRGNLTALSLPAPTPF. One can recognise an IQ domain in the interval 131–160; that stretch reads LDAAAVTLQKVYKSYRTRRNLADCAVVVEE.

In terms of tissue distribution, expressed in roots, rosette and cauline leaves, and at lower levels in stems, flowers and siliques.

It is found in the cytoplasm. The protein resides in the nucleus. Functionally, may be involved in biotic and abiotic stress responses. The chain is IQ domain-containing protein IQM5 from Arabidopsis thaliana (Mouse-ear cress).